The sequence spans 206 residues: Protein GrpE (206 aa).

The segment covering 1–15 (MTDSNGQKDNNQDQA) has biased composition (polar residues). The tract at residues 1–38 (MTDSNGQKDNNQDQAQPADPVVSKPYIMPDDPEEGTNE) is disordered.

It belongs to the GrpE family. Homodimer.

The protein localises to the cytoplasm. Functionally, participates actively in the response to hyperosmotic and heat shock by preventing the aggregation of stress-denatured proteins, in association with DnaK and GrpE. It is the nucleotide exchange factor for DnaK and may function as a thermosensor. Unfolded proteins bind initially to DnaJ; upon interaction with the DnaJ-bound protein, DnaK hydrolyzes its bound ATP, resulting in the formation of a stable complex. GrpE releases ADP from DnaK; ATP binding to DnaK triggers the release of the substrate protein, thus completing the reaction cycle. Several rounds of ATP-dependent interactions between DnaJ, DnaK and GrpE are required for fully efficient folding. The polypeptide is Protein GrpE (Rhodopseudomonas palustris (strain BisB5)).